Consider the following 297-residue polypeptide: Probable endonuclease 4 (297 aa).

The Zn(2+) site is built by His69, His110, Glu145, Asp179, His182, His214, Asp227, His229, and Glu259.

It belongs to the AP endonuclease 2 family. It depends on Zn(2+) as a cofactor.

It catalyses the reaction Endonucleolytic cleavage to 5'-phosphooligonucleotide end-products.. Functionally, endonuclease IV plays a role in DNA repair. It cleaves phosphodiester bonds at apurinic or apyrimidinic (AP) sites, generating a 3'-hydroxyl group and a 5'-terminal sugar phosphate. The sequence is that of Probable endonuclease 4 from Bacillus subtilis (strain 168).